Reading from the N-terminus, the 84-residue chain is Anthracycline acyl carrier protein DpsG (84 aa).

The Carrier domain occupies 3-80 (ELSLAELREI…SMLIFVNERL (78 aa)). The residue at position 40 (Ser40) is an O-(pantetheine 4'-phosphoryl)serine.

Its pathway is antibiotic biosynthesis; daunorubicin biosynthesis. The protein operates within antibiotic biosynthesis; carminomycin biosynthesis. It functions in the pathway antibiotic biosynthesis; rhodomycin biosynthesis. It participates in antibiotic biosynthesis; aclacinomycin biosynthesis. Functionally, involved in the biosynthesis of aklanonate which is an important precursor common to the formation of the clinically significant anthracyclines such as carminomycin, daunorubicin (daunomycin), rhodomycin, aclacinomycin T (aklavin) and aclacinomycin A (aclarubicin). These compounds are aromatic polyketide antibiotics that exhibit high cytotoxicity and are widely applied in the chemotherapy of a variety of cancers. The sequence is that of Anthracycline acyl carrier protein DpsG (dpsG) from Streptomyces peucetius.